A 150-amino-acid chain; its full sequence is Large ribosomal subunit protein bL9 (150 aa).

This sequence belongs to the bacterial ribosomal protein bL9 family.

Its function is as follows. Binds to the 23S rRNA. This Serratia proteamaculans (strain 568) protein is Large ribosomal subunit protein bL9.